The chain runs to 1407 residues: DNA-directed RNA polymerase subunit beta' (1407 aa).

Zn(2+) is bound by residues C70, C72, C85, and C88. Mg(2+) is bound by residues D460, D462, and D464. Residues C814, C888, C895, and C898 each contribute to the Zn(2+) site.

The protein belongs to the RNA polymerase beta' chain family. The RNAP catalytic core consists of 2 alpha, 1 beta, 1 beta' and 1 omega subunit. When a sigma factor is associated with the core the holoenzyme is formed, which can initiate transcription. Requires Mg(2+) as cofactor. The cofactor is Zn(2+).

It catalyses the reaction RNA(n) + a ribonucleoside 5'-triphosphate = RNA(n+1) + diphosphate. Functionally, DNA-dependent RNA polymerase catalyzes the transcription of DNA into RNA using the four ribonucleoside triphosphates as substrates. This chain is DNA-directed RNA polymerase subunit beta', found in Erwinia tasmaniensis (strain DSM 17950 / CFBP 7177 / CIP 109463 / NCPPB 4357 / Et1/99).